Here is a 2871-residue protein sequence, read N- to C-terminus: Fibrillin-1 (2871 aa).

The signal sequence occupies residues 1–24 (MRRGRLLEVALGFTVLLASYTSHR). Residues 25-44 (AEANLEAGNGKETRASRAKR) constitute a propeptide that is removed on maturation. The span at 29-39 (LEAGNGKETRA) shows a compositional bias: basic and acidic residues. A disordered region spans residues 29–49 (LEAGNGKETRASRAKRRGGGG). The fibrillin unique N-terminal (FUN) domain stretch occupies residues 45–81 (RGGGGHDALKGPNVCGSRYNAYCCPGWKTLPGGNQCI). Residues 45 to 450 (RGGGGHDALK…PPRVLPVNVT (406 aa)) are N-terminal domain. 11 disulfide bridges follow: C59/C68, C67/C80, C85/C94, C89/C100, C102/C111, C119/C129, C123/C134, C136/C145, C150/C160, C154/C166, and C168/C177. 3 consecutive EGF-like domains span residues 81–112 (IVPICRHSCGDGFCSRPNMCTCPSGQIAPSCG), 115–146 (SIQHCNIRCMNGGSCSDDHCLCQKGYIGTHCG), and 147–178 (QPVCESGCLNGGRCVAPNRCACTYGFTGPQCE). Residues 119–329 (CNIRCMNGGS…YTSPDGTRCI (211 aa)) are interaction with MFAP4. The 53-residue stretch at 184–236 (GPCFTVVSNQMCQGQLSGIVCTKTLCCATVGRAWGHPCEMCPAQPHPCRRGFI) folds into the TB 1 domain. Residues 195-221 (CQGQLSGIVCTKTLCCATVGRAWGHPC) are hybrid domain 1. One can recognise an EGF-like 4; calcium-binding domain in the interval 246–287 (DVDECQAIPGLCQGGNCINTVGSFECKCPAGHKFNEVSQKCE). 6 cysteine pairs are disulfide-bonded: C250–C262, C257–C271, C273–C286, C292–C304, C299–C313, and C315–C328. S268 is a glycosylation site (O-linked (Glc) serine). Residues 288 to 329 (DIDECSTIPGICDGGECTNTVSSYFCKCPPGFYTSPDGTRCI) enclose the EGF-like 5; calcium-binding domain. Positions 334-389 (GYCYTALTNGRCSNQLPQSITKMQCCCDVGRCWSPGVTVTPEMCPIRATEDFNKLC) constitute a TB 2 domain. An N-linked (GlcNAc...) asparagine glycan is attached at N448. The EGF-like 6 domain maps to 449–489 (VTDYCQLFRYLCHNGRCIPTPGSYRCECNKGFQLDLRGECI). 15 disulfide bridges follow: C453–C465, C460–C474, C476–C488, C494–C504, C499–C513, C515–C528, C534–C546, C541–C555, C557–C570, C576–C587, C582–C596, C598–C611, C617–C628, C623–C637, and C639–C652. O-linked (Glc) serine glycosylation is present at S471. One can recognise an EGF-like 7; calcium-binding domain in the interval 490 to 529 (DVDECEKNPCAGGECINNQGSYTCQCRPGYQSTLTRTECR). S510 is a glycosylation site (O-linked (Glc) serine). The EGF-like 8; calcium-binding domain maps to 530-571 (DIDECLQNGRICNNGRCINTDGSFHCVCNAGFHVTRDGKNCE). The 41-residue stretch at 572 to 612 (DMDECSIRNMCLNGMCINEDGSFKCICKPGFQLASDGRYCK) folds into the EGF-like 9; calcium-binding domain. Residues 613–653 (DINECETSGICMNGRCVNTDGSYRCECFPGLAVGLDGRVCV) enclose the EGF-like 10; calcium-binding domain. A TB 3 domain is found at 659-711 (STCYGGYKRGQCVKPLFGAVTKSECCCASTEYAFGEPCQPCPSQNSAEYQALC). One can recognise an EGF-like 11; calcium-binding domain in the interval 723–764 (DINECALDPDICPNGICENLRGTYKCICNSGYEVDSTGKNCV). Intrachain disulfides connect C727-C739, C734-C748, C750-C763, C769-C781, C776-C790, C792-C805, C811-C821, C816-C830, C832-C845, C853-C875, C862-C887, C876-C890, C896-C908, C914-C926, C921-C935, and C937-C950. Positions 765–806 (DINECVLNSLLCDNGQCRNTPGSFVCTCPKGFIYKPDLKTCE) constitute an EGF-like 12; calcium-binding domain. The EGF-like 13; calcium-binding domain maps to 807 to 846 (DIDECESSPCINGVCKNSPGSFICECSSESTLDPTKTICI). The TB 4 domain maps to 851 to 902 (GTCWQTIIDGRCEININGATLKSQCCSSLGAAWGSPCTPCQVDPICGKGYSR). The interval 862–887 (CEININGATLKSQCCSSLGAAWGSPC) is hybrid domain 2. One can recognise an EGF-like 14; calcium-binding domain in the interval 910–951 (DIDECEVFPGVCKNGLCVNSKGSFKCQCPNGMTLDATGRICL). Positions 956 to 1008 (ETCFLRYEDEECTLPVVGRHRMDACCCSVGAAWGTEECEECPPRNTPEYEELC) constitute a TB 5 domain. In terms of domain architecture, EGF-like 15; calcium-binding spans 1028 to 1069 (DINECKMIPNLCTHGKCRNTIGSFKCRCDSGFALDSEERNCI). 43 disulfide bridges follow: C1032–C1044, C1039–C1053, C1055–C1068, C1074–C1086, C1081–C1095, C1097–C1111, C1117–C1129, C1124–C1138, C1140–C1153, C1159–C1171, C1201–C1212, C1208–C1221, C1223–C1236, C1242–C1254, C1249–C1263, C1265–C1278, C1284–C1296, C1291–C1305, C1307–C1320, C1326–C1339, C1333–C1348, C1350–C1361, C1367–C1380, C1374–C1389, C1391–C1402, C1408–C1420, C1415–C1429, C1450–C1461, C1456–C1470, C1472–C1485, C1491–C1502, C1497–C1511, C1513–C1526, C1534–C1562, C1549–C1574, C1563–C1577, C1564–C1589, C1610–C1622, C1617–C1631, C1633–C1646, C1652–C1663, C1658–C1672, and C1674–C1687. The 43-residue stretch at 1070-1112 (DIDECRISPDLCGRGQCVNTPGDFECKCDEGYESGFMMMKNCM) folds into the EGF-like 16; calcium-binding domain. One can recognise an EGF-like 17; calcium-binding domain in the interval 1113–1154 (DIDECQRDPLLCRGGVCLNTEGSYRCECPSGHQMSPNISACI). O-linked (Glc) serine glycosylation occurs at S1135. An N-linked (GlcNAc...) asparagine glycan is attached at N1149. One can recognise an EGF-like 18; calcium-binding domain in the interval 1155–1196 (DINECELSAHLCPHGRCVNLIGKYQRARNPGYHSTPDRLFCV). The 41-residue stretch at 1197–1237 (DIDECSIMNGGCETFCTNSEGSYECSCQPGFALMPDQRSCT) folds into the EGF-like 19; calcium-binding domain. The O-linked (Glc) serine glycan is linked to S1218. The EGF-like 20; calcium-binding domain occupies 1238-1279 (DIDECEDNPNICDGGQCTNIPGEYRCLCYDGFMASEDMKTCV). The region spanning 1280-1321 (DVNECDLNPNICLSGTCENTKGSFICHCDMGYSGKKGKTGCT) is the EGF-like 21; calcium-binding domain. S1302 is a glycosylation site (O-linked (Glc) serine). One can recognise an EGF-like 22; calcium-binding domain in the interval 1322–1362 (DINECEIGAHNCDRHAVCTNTAGSFNCSCSPGWIGDGIKCT). Residue S1345 is glycosylated (O-linked (Glc) serine). N1347 carries an N-linked (GlcNAc...) asparagine glycan. The 41-residue stretch at 1363-1403 (DLDECSNGTHMCSQHADCKNTMGSYRCLCKEGYTGDGFTCA) folds into the EGF-like 23; calcium-binding domain. Residue N1369 is glycosylated (N-linked (GlcNAc...) asparagine). S1386 is a glycosylation site (O-linked (Glc) serine). The EGF-like 24; calcium-binding domain occupies 1404–1445 (DLDECSENVKLCGNVQCLYAPGGYHCEYDMGFVPSADRKSCV). An EGF-like 25; calcium-binding domain is found at 1446 to 1486 (DSDECSLPNICVFGTCHNLPGLFRCECEIGYELDRSGGNCT). The N-linked (GlcNAc...) asparagine glycan is linked to N1484. The EGF-like 26; calcium-binding domain occupies 1487–1527 (DVNECLEPPTCISGNCVNTPGSYTCVCPPDFELNPTRVGCV). S1508 carries an O-linked (Glc) serine glycan. The tract at residues 1528–2731 (DTRSGNCYLD…GYPKRGRKRR (1204 aa)) is C-terminal domain. Residues 1532 to 1589 (GNCYLDVRPRGDNGDTACSNEIGVGVSKASCCCSLGKAWGTPCEQCPPVNTSEYKILC) form the TB 6 domain. The Cell attachment site motif lies at 1541–1543 (RGD). A glycan (N-linked (GlcNAc...) asparagine) is linked at N1581. The EGF-like 27; calcium-binding domain occupies 1606 to 1647 (DIDECQELPGLCQGGKCINTFGSFQCRCPTGYYLNEDTRVCD). S1628 carries an O-linked (Glc) serine glycan. The region spanning 1648-1688 (DVNECETPGICGPGTCYNTVGNYTCICPPDYMQVNGGNNCM) is the EGF-like 28; calcium-binding domain. Residue N1669 is glycosylated (N-linked (GlcNAc...) asparagine). Positions 1693 to 1748 (SLCYRNYYADNQTCDGELLFNMTKKMCCCSYNIGRAWNKPCEQCPIPSTDEFATLC) constitute a TB 7 domain. N-linked (GlcNAc...) asparagine glycans are attached at residues N1703 and N1713. The EGF-like 29; calcium-binding domain maps to 1766 to 1807 (DIDECREIPGVCENGVCINMVGSFRCECPVGFFYNDKLLVCE). Intrachain disulfides connect C1770–C1782, C1777–C1791, C1793–C1806, C1812–C1824, C1818–C1833, C1835–C1847, C1853–C1865, C1860–C1874, C1876–C1889, C1895–C1905, C1900–C1914, C1916–C1928, C1934–C1947, C1942–C1956, C1958–C1971, C1977–C1989, C1984–C1998, C2000–C2011, C2017–C2029, C2024–C2038, C2040–C2053, C2061–C2083, C2070–C2096, C2084–C2099, C2085–C2111, C2131–C2142, C2137–C2151, C2153–C2164, C2170–C2181, C2176–C2190, C2192–C2204, C2210–C2221, C2217–C2230, C2232–C2245, C2251–C2265, C2258–C2274, C2276–C2289, C2295–C2307, C2302–C2316, and C2318–C2331. The region spanning 1808-1848 (DIDECQNGPVCQRNAECINTAGSYRCDCKPGYRFTSTGQCN) is the EGF-like 30; calcium-binding domain. A glycan (O-linked (Glc) serine) is linked at S1830. In terms of domain architecture, EGF-like 31; calcium-binding spans 1849 to 1890 (DRNECQEIPNICSHGQCIDTVGSFYCLCHTGFKTNADQTMCL). S1871 carries an O-linked (Glc) serine glycan. The EGF-like 32; calcium-binding domain occupies 1891 to 1929 (DINECERDACGNGTCRNTIGSFNCRCNHGFILSHNNDCI). An N-linked (GlcNAc...) asparagine glycan is attached at N1902. S1911 is a glycosylation site (O-linked (Glc) serine). Residues 1930 to 1972 (DVDECATGNGNLCRNGQCINTVGSFQCQCNEGYEVAPDGRTCV) enclose the EGF-like 33; calcium-binding domain. S1953 carries O-linked (Glc) serine glycosylation. An EGF-like 34; calcium-binding domain is found at 1973–2012 (DINECLLEPGKCAPGTCQNLDGSYRCICPPGYSLQNDKCE). Residues 2013–2054 (DIDECVEEPEICALGTCSNTEGSFKCLCPDGFSLSSTGRRCQ) form the EGF-like 35; calcium-binding domain. An O-linked (Glc) serine glycan is attached at S2035. One can recognise a TB 8 domain in the interval 2059–2111 (SYCYAKFEGGKCSSPKSRNHSKQECCCALKGEGWGDPCELCPTEPDEAFRQIC). A glycan (N-linked (GlcNAc...) asparagine) is linked at N2077. Residues 2127 to 2165 (DMDECKEPDVCKHGQCINTDGSYRCECPFGYILEGNECV) form the EGF-like 36; calcium-binding domain. O-linked (Glc) serine glycosylation is present at S2148. The region spanning 2166–2205 (DTDECSVGNPCGNGTCKNVIGGFECTCEEGFEPGPMMTCE) is the EGF-like 37; calcium-binding domain. A glycan (N-linked (GlcNAc...) asparagine) is linked at N2178. Residues 2206-2246 (DINECAQNPLLCAFRCVNTYGSYECKCPTGYVLREDRRMCK) form the EGF-like 38; calcium-binding domain. S2227 carries an O-linked (Glc) serine glycan. Positions 2247–2290 (DEDECEEGKHDCAEKQMECKNLIGMYICICGPGYQRRPDGEGCV) constitute an EGF-like 39; calcium-binding domain. The EGF-like 40; calcium-binding domain occupies 2291–2332 (DENECQTKPGICENGRCLNTRGSYTCECNDGFTASPTQDECL). An O-linked (Glc) serine glycan is attached at S2313. The TB 9 domain occupies 2337-2390 (GYCFTEVLQNMCQIGSSNRNPVTKSECCCDGGRGWGPHCEICPFQGTVAFKKLC). The 42-residue stretch at 2402 to 2443 (DIDECKVIHDVCRNGECINDRGSYHCICKTGYTPDITGTACV) folds into the EGF-like 41; calcium-binding domain. 21 disulfide bridges follow: C2406/C2418, C2413/C2427, C2429/C2442, C2448/C2459, C2455/C2468, C2470/C2483, C2489/C2500, C2496/C2509, C2511/C2522, C2528/C2541, C2535/C2550, C2552/C2565, C2571/C2581, C2577/C2590, C2592/C2605, C2611/C2622, C2617/C2631, C2633/C2646, C2652/C2663, C2659/C2672, and C2674/C2686. Residues 2444–2484 (DLNECNQAPKPCNFICKNTEGSYQCSCPKGYILQEDGRSCK) enclose the EGF-like 42; calcium-binding domain. An O-linked (Glc) serine glycan is attached at S2465. Positions 2485 to 2523 (DLDECATKQHNCQFLCVNTIGSFACKCPPGFTQHHTACI) constitute an EGF-like 43; calcium-binding domain. Residues 2524 to 2566 (DNNECTSDINLCGAKGICQNTPGSFTCECQRGFSLDQSGASCE) enclose the EGF-like 44; calcium-binding domain. Residue S2547 is glycosylated (O-linked (Glc) serine). The EGF-like 45; calcium-binding domain occupies 2567–2606 (DVDECEGNHRCQHGCQNIIGGYRCSCPQGYLQHYQWNQCV). One can recognise an EGF-like 46; calcium-binding domain in the interval 2607-2647 (DENECLSAHICGGASCHNTLGSYKCMCPAGFQYEQFSGGCQ). S2628 carries an O-linked (Glc) serine glycan. Positions 2648-2687 (DINECGSSQAPCSYGCSNTEGGYLCGCPPGYFRIGQGHCV) constitute an EGF-like 47; calcium-binding domain. 2 positions are modified to phosphoserine: S2702 and S2709. N-linked (GlcNAc...) asparagine glycosylation is found at N2734, N2750, and N2767.

The protein belongs to the fibrillin family. Interacts with COL16A1. Interacts with integrin alpha-V/beta-3. Interacts with ADAMTS10; this interaction promotes microfibril assembly. Interacts with THSD4; this interaction promotes fibril formation. Interacts (via N-terminal domain) with FBLN2 and FBLN5. Interacts with ELN. Forms a ternary complex with ELN and FBLN2 or FBLN5 and a significant interaction with ELN seen only in the presence of FBLN2 or FBLN5. Interacts (via N-terminal domain) with LTBP2 (via C-terminal domain) in a Ca(+2)-dependent manner. Interacts (via N-terminal domain) with LTBP1 (via C-terminal domain). Interacts with integrins ITGA5:ITGB1, ITGAV:ITGB3 and ITGAV:ITGB6. Interacts (via N-terminal domain) with BMP2, BMP4, BMP7, BMP10 and GDF5. Interacts (via N-terminal domain) with MFAP2 and MFAP5. Interacts with ADAMTSL5. Interacts with MFAP4. Interacts (via N-terminal domain) with TNFSF11 in a Ca(+2)-dependent manner. Interacts (via N-terminal domain) with EFEMP2; this interaction inhibits EFEMP2 binding to LOX and ELN. Post-translationally, cleavage of N- and C-terminus by furin is required for incorporation into the extracellular matrix and assembly into microfibrils. The C-terminus, which corresponds to the Asprosin chain, was initially thought to constitute a propeptide. Fibrillin-1 and Asprosin chains are still linked together during the secretion from cells, but are subsequently separated by furin, an essential step for incorporation of Fibrillin-1 into the nascent microfibrils. Forms intermolecular disulfide bonds either with other fibrillin-1 molecules or with other components of the microfibrils. In terms of processing, O-glycosylated on serine residues by POGLUT2 and POGLUT3 which is necessary for efficient protein secretion.

The protein resides in the secreted. It localises to the extracellular space. Its subcellular location is the extracellular matrix. Functionally, structural component of the 10-12 nm diameter microfibrils of the extracellular matrix, which conveys both structural and regulatory properties to load-bearing connective tissues. Fibrillin-1-containing microfibrils provide long-term force bearing structural support. In tissues such as the lung, blood vessels and skin, microfibrils form the periphery of the elastic fiber, acting as a scaffold for the deposition of elastin. In addition, microfibrils can occur as elastin-independent networks in tissues such as the ciliary zonule, tendon, cornea and glomerulus where they provide tensile strength and have anchoring roles. Fibrillin-1 also plays a key role in tissue homeostasis through specific interactions with growth factors, such as the bone morphogenetic proteins (BMPs), growth and differentiation factors (GDFs) and latent transforming growth factor-beta-binding proteins (LTBPs), cell-surface integrins and other extracellular matrix protein and proteoglycan components. Regulates osteoblast maturation by controlling TGF-beta bioavailability and calibrating TGF-beta and BMP levels, respectively. Negatively regulates osteoclastogenesis by binding and sequestering an osteoclast differentiation and activation factor TNFSF11. This leads to disruption of TNFSF11-induced Ca(2+) signaling and impairment of TNFSF11-mediated nuclear translocation and activation of transcription factor NFATC1 which regulates genes important for osteoclast differentiation and function. Mediates cell adhesion via its binding to cell surface receptors integrins ITGAV:ITGB3 and ITGA5:ITGB1. Binds heparin and this interaction plays an important role in the assembly of microfibrils. Its function is as follows. Hormone that targets the liver to increase plasma glucose levels. Secreted by white adipose tissue and circulates in the plasma. Acts in response to fasting and promotes blood glucose elevation by binding to the surface of hepatocytes. Promotes hepatocyte glucose release by activating the protein kinase A activity in the liver, resulting in rapid glucose release into the circulation. The protein is Fibrillin-1 of Sus scrofa (Pig).